The sequence spans 1265 residues: MSENLFSKKKIFFNQTIGKKEVKNVIAWAFTSYGAARTAYLVEQLKDLGFHYATKAGISLSVEDLLIPPLKDSLLQTAENEIKATLNRYLLGEITEVERFQKVIDIWHRTSETLKDEVVDYFKSTDPLNSLYMMSFSGARGNLSQVHQLVGMRGLMADPQGEIIDFPIRSNFKEGLTTTEYLISSYGARKGVVDTALRTADSGYLTRRLVDIAQEVIIREIDCETPRGVILTALKENGKILISLKDRLVGRVLLHNLYHPKTHSLIAQKNESISVLLADDIIKAGLKEVWIRSPLTCKATRSVCQYCYGWNLAHGRLVELGEAVGIIAAQSIGEPGTQLTMRTFHTGGVFTAEVAKQITAPFPGRIYYPLNTTFREIRTRYGDNAWWVENNAKLRLEGENGKRVSFNLTQGSIIRIKDQSWVETNDLLAEIASTAPNTRRAKEKTTRELRTDIAGEVYFQNLEIDEAGGQVDTAGGSIWILGGNVYNLSSNFDVILKNGDFILNGSILARTQFISQYGGYVRLTDDNLTVEVIPASLKIQNAKIFIDETDQPCLHFKNNETFELKIQNETQLKHGQVVAERYLTTEMGGIIRYADLDAKTTNKNGYEITKSGSLLWIPEETHEVNTEAKNVLVKNGQYIPSGTQLIKNKKIRNKHSGVVELVHKKNFVIEIIIKPGIVLKIKNNVSFSKKAKRFIQPGEYLFSKFVVEDLRYLDYIITSTGIILLLRPVVEYKVESPKTIIRDDKNHLKISSIQSILYKDGERIKSVQGIELFKIQLKLQVRKGLKHLPIKTNFIPSSQNSFELEFLIIESILPKNDKYFDSTVLESLAKAQTKILVKNNQLVKKGELIAQIEIISINQGEIRWIGDNTAKQIRRLLLITEKQIVTIPIQNLTKLKNKNLNLGNFIRAGEEIEETIKIPNSGQIIEITSTYIRLRISRPYLISARAIIRVLTGDLVQSGESLALLVFERAKTGDIIQGLPRIEELLEARKPKDNCVLSTHPGFTQLYYSETIELKIKSLDKINTLLELQPGVFPTVTNNQFIEAGAPLSEGDISVHEILEIFFNLYFKNRVNCLSLADAIHLSLQKIQQFLVSEVQSVYQSQGIDISDKHIEIIIKQMTNKVKIEEGGDTTLLPNELIEFQQIEKMNEKFSTSNGQLASYTPILLGITKSSLNTQSFISAASFQETTRVLAKAAVEGKIDQLRGLKENVIIGNLIPAGTGFSAYNDNAVFQNEDIESIEVKTSVLNSPAESDTNSDLDDIILNKD.

Zn(2+) is bound by residues C223, C297, C304, and C307.

It belongs to the RNA polymerase beta' chain family. RpoC2 subfamily. As to quaternary structure, in plastids the minimal PEP RNA polymerase catalytic core is composed of four subunits: alpha, beta, beta', and beta''. When a (nuclear-encoded) sigma factor is associated with the core the holoenzyme is formed, which can initiate transcription. Zn(2+) serves as cofactor.

It is found in the plastid. Its subcellular location is the cyanelle. The catalysed reaction is RNA(n) + a ribonucleoside 5'-triphosphate = RNA(n+1) + diphosphate. DNA-dependent RNA polymerase catalyzes the transcription of DNA into RNA using the four ribonucleoside triphosphates as substrates. The chain is DNA-directed RNA polymerase subunit beta'' from Cyanophora paradoxa.